The chain runs to 331 residues: Ketol-acid reductoisomerase (NADP(+)) (331 aa).

One can recognise a KARI N-terminal Rossmann domain in the interval 2–182 (AQLFYDSDAD…GGTRAGILET (181 aa)). NADP(+)-binding positions include 25-28 (YGSQ), Ser-51, Ser-53, and 83-86 (DEFQ). Residue His-108 is part of the active site. Gly-134 is a binding site for NADP(+). The KARI C-terminal knotted domain maps to 183-328 (NFKEETETDL…KGLRAMFSWL (146 aa)). The Mg(2+) site is built by Asp-191, Glu-195, Glu-227, and Glu-231. Ser-252 contacts substrate.

Belongs to the ketol-acid reductoisomerase family. The cofactor is Mg(2+).

It carries out the reaction (2R)-2,3-dihydroxy-3-methylbutanoate + NADP(+) = (2S)-2-acetolactate + NADPH + H(+). It catalyses the reaction (2R,3R)-2,3-dihydroxy-3-methylpentanoate + NADP(+) = (S)-2-ethyl-2-hydroxy-3-oxobutanoate + NADPH + H(+). It participates in amino-acid biosynthesis; L-isoleucine biosynthesis; L-isoleucine from 2-oxobutanoate: step 2/4. Its pathway is amino-acid biosynthesis; L-valine biosynthesis; L-valine from pyruvate: step 2/4. Functionally, involved in the biosynthesis of branched-chain amino acids (BCAA). Catalyzes an alkyl-migration followed by a ketol-acid reduction of (S)-2-acetolactate (S2AL) to yield (R)-2,3-dihydroxy-isovalerate. In the isomerase reaction, S2AL is rearranged via a Mg-dependent methyl migration to produce 3-hydroxy-3-methyl-2-ketobutyrate (HMKB). In the reductase reaction, this 2-ketoacid undergoes a metal-dependent reduction by NADPH to yield (R)-2,3-dihydroxy-isovalerate. The chain is Ketol-acid reductoisomerase (NADP(+)) from Prochlorococcus marinus (strain MIT 9313).